The chain runs to 508 residues: ATP synthase subunit alpha, chloroplastic (508 aa).

170–177 (GDRQTGKT) contributes to the ATP binding site.

Belongs to the ATPase alpha/beta chains family. As to quaternary structure, F-type ATPases have 2 components, CF(1) - the catalytic core - and CF(0) - the membrane proton channel. CF(1) has five subunits: alpha(3), beta(3), gamma(1), delta(1), epsilon(1). CF(0) has four main subunits: a, b, b' and c.

Its subcellular location is the plastid. The protein resides in the chloroplast thylakoid membrane. It carries out the reaction ATP + H2O + 4 H(+)(in) = ADP + phosphate + 5 H(+)(out). Produces ATP from ADP in the presence of a proton gradient across the membrane. The alpha chain is a regulatory subunit. The polypeptide is ATP synthase subunit alpha, chloroplastic (Helianthus annuus (Common sunflower)).